Reading from the N-terminus, the 483-residue chain is 1-aminocyclopropane-1-carboxylate synthase 2 (483 aa).

Lysine 275 is modified (N6-(pyridoxal phosphate)lysine).

The protein belongs to the class-I pyridoxal-phosphate-dependent aminotransferase family. Pyridoxal 5'-phosphate is required as a cofactor.

It carries out the reaction S-adenosyl-L-methionine = 1-aminocyclopropane-1-carboxylate + S-methyl-5'-thioadenosine + H(+). The protein operates within alkene biosynthesis; ethylene biosynthesis via S-adenosyl-L-methionine; ethylene from S-adenosyl-L-methionine: step 1/2. Its function is as follows. Catalyzes the formation of 1-aminocyclopropane-1-carboxylate, a direct precursor of ethylene in higher plants. Involved in defense response by producing ethylene after pathogen infection. Involved in several phosphate deficiency-induced adaptive responses, such as lateral root elongation. This Oryza sativa subsp. japonica (Rice) protein is 1-aminocyclopropane-1-carboxylate synthase 2.